Reading from the N-terminus, the 725-residue chain is Endoglucanase G (725 aa).

The first 35 residues, 1–35 (MLKTKRKLTKAIGVALSISILSSLVSFIPQTNTYA), serve as a signal peptide directing secretion. Catalysis depends on aspartate 93, which acts as the Nucleophile. Catalysis depends on residues histidine 408, aspartate 446, and glutamate 455. The 162-residue stretch at 489 to 650 (ITNDEVIIKA…GVKVFGNEPA (162 aa)) folds into the CBM3 domain. A Dockerin domain is found at 658 to 724 (PEILYGDVNS…LLGTITQLPQ (67 aa)).

Belongs to the glycosyl hydrolase 9 (cellulase E) family.

The enzyme catalyses Endohydrolysis of (1-&gt;4)-beta-D-glucosidic linkages in cellulose, lichenin and cereal beta-D-glucans.. Its pathway is glycan metabolism; cellulose degradation. In terms of biological role, the biological conversion of cellulose to glucose generally requires three types of hydrolytic enzymes: (1) Endoglucanases which cut internal beta-1,4-glucosidic bonds; (2) Exocellobiohydrolases that cut the disaccharide cellobiose from the non-reducing end of the cellulose polymer chain; (3) Beta-1,4-glucosidases which hydrolyze the cellobiose and other short cello-oligosaccharides to glucose. This is Endoglucanase G (celCCG) from Ruminiclostridium cellulolyticum (strain ATCC 35319 / DSM 5812 / JCM 6584 / H10) (Clostridium cellulolyticum).